The primary structure comprises 439 residues: Phosphomethylpyrimidine synthase (439 aa).

Substrate-binding positions include Asn-67, Met-96, Tyr-126, His-165, 187–189 (SRG), 228–231 (DSLR), and Glu-267. His-271 contributes to the Zn(2+) binding site. Tyr-294 contributes to the substrate binding site. His-335 provides a ligand contact to Zn(2+). [4Fe-4S] cluster contacts are provided by Cys-411, Cys-414, and Cys-418.

Belongs to the ThiC family. Requires [4Fe-4S] cluster as cofactor.

It carries out the reaction 5-amino-1-(5-phospho-beta-D-ribosyl)imidazole + S-adenosyl-L-methionine = 4-amino-2-methyl-5-(phosphooxymethyl)pyrimidine + CO + 5'-deoxyadenosine + formate + L-methionine + 3 H(+). It participates in cofactor biosynthesis; thiamine diphosphate biosynthesis. Functionally, catalyzes the synthesis of the hydroxymethylpyrimidine phosphate (HMP-P) moiety of thiamine from aminoimidazole ribotide (AIR) in a radical S-adenosyl-L-methionine (SAM)-dependent reaction. The polypeptide is Phosphomethylpyrimidine synthase (Ignicoccus hospitalis (strain KIN4/I / DSM 18386 / JCM 14125)).